Reading from the N-terminus, the 134-residue chain is MENKKTIYFLCTGNSCRSQMAEAWGKQYLGDKWNVYSAGMEAHGVNPNAIKAMNEVNIDITNQTSDIIDANILNSADLVVTLCSHADSVCPSTPPHVNRVHWGFDDPAGKEWSEFQRVRDEIGERIKRFSKTGE.

Active-site nucleophile residues include cysteine 11, cysteine 83, and cysteine 90. 2 cysteine pairs are disulfide-bonded: cysteine 11-cysteine 83 and cysteine 83-cysteine 90.

This sequence belongs to the low molecular weight phosphotyrosine protein phosphatase family. Thioredoxin-coupled ArsC subfamily.

It localises to the cytoplasm. The catalysed reaction is arsenate + [thioredoxin]-dithiol + H(+) = arsenite + [thioredoxin]-disulfide + H2O. In terms of biological role, catalyzes the reduction of arsenate [As(V)] to arsenite [As(III)]. The polypeptide is Arsenate reductase (Bacillus cereus (strain ATCC 14579 / DSM 31 / CCUG 7414 / JCM 2152 / NBRC 15305 / NCIMB 9373 / NCTC 2599 / NRRL B-3711)).